A 484-amino-acid polypeptide reads, in one-letter code: Folate synthesis bifunctional protein (484 aa).

An HPPK region spans residues 15-141 (VIALGSNVGN…PFVLAPLVDL (127 aa)). A Pterin-binding domain is found at 202 to 470 (TYVMGILNLT…NVRDNVDAAR (269 aa)). The tract at residues 204 to 484 (VMGILNLTPD…MMTKRFKNVD (281 aa)) is DHPS. Residue N209 participates in Mg(2+) binding. Residues T249, D286, N305, D378, K423, and 458–460 (RVH) contribute to the (7,8-dihydropterin-6-yl)methyl diphosphate site.

In the N-terminal section; belongs to the HPPK family. This sequence in the C-terminal section; belongs to the DHPS family. Mg(2+) is required as a cofactor. In terms of tissue distribution, expressed exclusively in reproductive tissues.

It is found in the cytoplasm. Its subcellular location is the cytosol. It catalyses the reaction 6-hydroxymethyl-7,8-dihydropterin + ATP = (7,8-dihydropterin-6-yl)methyl diphosphate + AMP + H(+). The enzyme catalyses (7,8-dihydropterin-6-yl)methyl diphosphate + 4-aminobenzoate = 7,8-dihydropteroate + diphosphate. It participates in cofactor biosynthesis; tetrahydrofolate biosynthesis; 2-amino-4-hydroxy-6-hydroxymethyl-7,8-dihydropteridine diphosphate from 7,8-dihydroneopterin triphosphate: step 4/4. Its pathway is cofactor biosynthesis; tetrahydrofolate biosynthesis; 7,8-dihydrofolate from 2-amino-4-hydroxy-6-hydroxymethyl-7,8-dihydropteridine diphosphate and 4-aminobenzoate: step 1/2. Inhibited by sulfanilamide. Functionally, catalyzes the first two consecutive steps of tetrahydrofolate biosynthesis. Plays a role in seed stress response and survival. The protein is Folate synthesis bifunctional protein of Arabidopsis thaliana (Mouse-ear cress).